Reading from the N-terminus, the 393-residue chain is Protein TsgA (393 aa).

The next 12 membrane-spanning stretches (helical) occupy residues 11–31, 51–71, 78–98, 101–121, 134–154, 162–182, 206–226, 245–265, 273–293, 298–318, 332–352, and 361–381; these read WISFLSYALTGALVIVTGMVM, FLNAGILISIFLNAWLMEIVP, FGFILMILAVAGLMLSHSLAL, AAMFVLGLVSGITMSIGTFLI, LLFTDSFFSMAGMVFPMVAAF, WYWVYACIGLVYLAIFILTFG, IGVLFLAVAALCYILGQLGFI, ALVSDFWMSYMFGMWAFSFIL, ILTVLAGMATVLMYLFITGTQ, WFILTLGFFSSAIYTSIITLG, FILTCGTIGTMLTFVVTGPIV, and LLTANGLYAVVFVMCFALGFV.

This sequence belongs to the major facilitator superfamily. TsgA family.

It localises to the cell inner membrane. The sequence is that of Protein TsgA from Salmonella arizonae (strain ATCC BAA-731 / CDC346-86 / RSK2980).